Here is a 126-residue protein sequence, read N- to C-terminus: Holo-[acyl-carrier-protein] synthase (126 aa).

The Mg(2+) site is built by Asp8 and Glu57.

It belongs to the P-Pant transferase superfamily. AcpS family. The cofactor is Mg(2+).

Its subcellular location is the cytoplasm. The enzyme catalyses apo-[ACP] + CoA = holo-[ACP] + adenosine 3',5'-bisphosphate + H(+). Functionally, transfers the 4'-phosphopantetheine moiety from coenzyme A to a Ser of acyl-carrier-protein. The protein is Holo-[acyl-carrier-protein] synthase of Leptospira interrogans serogroup Icterohaemorrhagiae serovar copenhageni (strain Fiocruz L1-130).